The chain runs to 68 residues: Peptide TsPep3 (68 aa).

A signal peptide spans 1-26 (MKLSCGFLLIFLVLSAMIATFSEVEA). 4 disulfide bridges follow: Cys30–Cys38, Cys33–Cys54, Cys37–Cys47, and Cys42–Cys52. A propeptide spanning residues 56–68 (GRSDLNEEFENYQ) is cleaved from the precursor.

In terms of tissue distribution, expressed by the venom gland.

The protein resides in the secreted. Its function is as follows. Probable weak potassium channel blocker. In Tityus serrulatus (Brazilian scorpion), this protein is Peptide TsPep3.